Consider the following 362-residue polypeptide: Protein RecA (362 aa).

65–72 (GPESSGKT) is a binding site for ATP. A disordered region spans residues 323–362 (RVANGMEPLNEKSTKETADDKASGKTGENKQETIEEASKE). Over residues 331-362 (LNEKSTKETADDKASGKTGENKQETIEEASKE) the composition is skewed to basic and acidic residues.

The protein belongs to the RecA family.

The protein localises to the cytoplasm. Can catalyze the hydrolysis of ATP in the presence of single-stranded DNA, the ATP-dependent uptake of single-stranded DNA by duplex DNA, and the ATP-dependent hybridization of homologous single-stranded DNAs. It interacts with LexA causing its activation and leading to its autocatalytic cleavage. This chain is Protein RecA, found in Limosilactobacillus reuteri (strain DSM 20016) (Lactobacillus reuteri).